The following is a 227-amino-acid chain: A-type potassium channel modulatory protein KCNIP1 (227 aa).

The EF-hand 1; degenerate domain maps to 38–94 (LEMTMVCHRPEGLEQLEAQTNFTKRELQVLYRGFKNECPSGVVNEETFKQIYAQFFP). EF-hand domains follow at residues 97–132 (DAST…LLRG), 133–168 (TVHE…IYDM), and 181–216 (TPRQ…DDNI). 9 residues coordinate Ca(2+): Asp146, Asn148, Asp150, Tyr152, Glu157, Asp194, Asn196, Asp198, and Glu205. The tract at residues 214 to 227 (DNIMRSLQLFQNVM) is interaction with KCND2.

It belongs to the recoverin family. As to quaternary structure, component of heteromultimeric potassium channels. Identified in potassium channel complexes containing KCND1, KCND2, KCND3, KCNIP1, KCNIP2, KCNIP3, KCNIP4, DPP6 and DPP10. Part of a heterooctamer composed of the tetrameric channel and four KCNIP1 chains. Probably part of a complex consisting of KCNIP1, KCNIP2 isoform 3 and KCND2. Self-associates to form homodimers and homotetramers. Interacts with KCNIP2 isoform 3 in a calcium-dependent manner. Interacts with KCND2; this interaction mediates the capture of both the N- and C-terminus of KCND2, thus preventing KCND2 N-type inactivation and modulates the channel gating kinetics. Interacts with KCND3; each KCNIP1 monomer interacts with two adjacent KCND3 subunits, through both the N-terminal inactivation ball of a KCND3 subunit and a C-terminal helix from the adjacent KCND3 subunit, clamping them together; this interaction stabilizes the tetrameric form and modulates the channel gating kinetics namely channel activation and inactivation kinetics and rate of recovery from inactivation. Detected in hippocampus and in the molecular layer of the dentate gyrus (at protein level). Isoform 1 and isoform 2 are predominantly expressed at equal levels in brain. Colocalizes with KCND3 in inhibitory interneurons in cortex and hippocampus and in striatal interneurons.

Its subcellular location is the cell membrane. It localises to the cytoplasm. It is found in the cell projection. The protein localises to the dendrite. Regulatory subunit of Kv4/D (Shal)-type voltage-gated rapidly inactivating A-type potassium channels. Regulates channel density, inactivation kinetics and rate of recovery from inactivation in a calcium-dependent and isoform-specific manner. Modulates KCND2/Kv4.2 currents. In vitro, modulates KCND1/Kv4.1 currents. Increases the presence of KCND2 at the cell surface. The polypeptide is A-type potassium channel modulatory protein KCNIP1 (Rattus norvegicus (Rat)).